The primary structure comprises 367 residues: Chorismate synthase (367 aa).

Arg-48 contributes to the NADP(+) binding site. Residues 125 to 127, 243 to 244, Gly-283, 298 to 302, and Arg-324 each bind FMN; these read RSS, NA, and KPTSS.

The protein belongs to the chorismate synthase family. In terms of assembly, homotetramer. Requires FMNH2 as cofactor.

It carries out the reaction 5-O-(1-carboxyvinyl)-3-phosphoshikimate = chorismate + phosphate. It functions in the pathway metabolic intermediate biosynthesis; chorismate biosynthesis; chorismate from D-erythrose 4-phosphate and phosphoenolpyruvate: step 7/7. Catalyzes the anti-1,4-elimination of the C-3 phosphate and the C-6 proR hydrogen from 5-enolpyruvylshikimate-3-phosphate (EPSP) to yield chorismate, which is the branch point compound that serves as the starting substrate for the three terminal pathways of aromatic amino acid biosynthesis. This reaction introduces a second double bond into the aromatic ring system. This Psychrobacter arcticus (strain DSM 17307 / VKM B-2377 / 273-4) protein is Chorismate synthase.